The primary structure comprises 164 residues: 3-hydroxyacyl-[acyl-carrier-protein] dehydratase FabZ (164 aa).

The active site involves His-70.

This sequence belongs to the thioester dehydratase family. FabZ subfamily.

Its subcellular location is the cytoplasm. The catalysed reaction is a (3R)-hydroxyacyl-[ACP] = a (2E)-enoyl-[ACP] + H2O. Involved in unsaturated fatty acids biosynthesis. Catalyzes the dehydration of short chain beta-hydroxyacyl-ACPs and long chain saturated and unsaturated beta-hydroxyacyl-ACPs. The protein is 3-hydroxyacyl-[acyl-carrier-protein] dehydratase FabZ of Synechocystis sp. (strain ATCC 27184 / PCC 6803 / Kazusa).